A 344-amino-acid polypeptide reads, in one-letter code: Phenylalanine--tRNA ligase alpha subunit (344 aa).

Residue glutamate 256 coordinates Mg(2+).

It belongs to the class-II aminoacyl-tRNA synthetase family. Phe-tRNA synthetase alpha subunit type 1 subfamily. In terms of assembly, tetramer of two alpha and two beta subunits. The cofactor is Mg(2+).

The protein localises to the cytoplasm. The enzyme catalyses tRNA(Phe) + L-phenylalanine + ATP = L-phenylalanyl-tRNA(Phe) + AMP + diphosphate + H(+). This chain is Phenylalanine--tRNA ligase alpha subunit, found in Bacillus mycoides (strain KBAB4) (Bacillus weihenstephanensis).